The chain runs to 613 residues: Chaperone protein DnaK (613 aa).

Positions 578 to 613 (MYQSQATQGTSQNSSQNNNSQNNNGDTVDADFKESK) are disordered. A compositionally biased stretch (low complexity) spans 580-602 (QSQATQGTSQNSSQNNNSQNNNG).

Belongs to the heat shock protein 70 family.

In terms of biological role, acts as a chaperone. In Picrophilus torridus (strain ATCC 700027 / DSM 9790 / JCM 10055 / NBRC 100828 / KAW 2/3), this protein is Chaperone protein DnaK.